Here is a 260-residue protein sequence, read N- to C-terminus: CD27 antigen (260 aa).

The N-terminal stretch at 1-19 is a signal peptide; the sequence is MARPHPWWLCVLGTLVGLS. Topologically, residues 20-191 are extracellular; the sequence is ATPAPKSCPE…RSLCSSDFIR (172 aa). TNFR-Cys repeat units follow at residues 26–63, 64–104, and 105–141; these read SCPE…AQCD, PCIP…NAEC, and ACRN…PHPQ. 8 disulfides stabilise this stretch: cysteine 27–cysteine 39, cysteine 40–cysteine 53, cysteine 43–cysteine 62, cysteine 65–cysteine 81, cysteine 84–cysteine 96, cysteine 87–cysteine 104, cysteine 106–cysteine 120, and cysteine 112–cysteine 117. Asparagine 95 is a glycosylation site (N-linked (GlcNAc...) asparagine). Serine 127 carries O-linked (GalNAc...) serine glycosylation. Residues 192–212 form a helical membrane-spanning segment; that stretch reads ILVIFSGMFLVFTLAGALFLH. Over 213-260 the chain is Cytoplasmic; the sequence is QRRKYRSNKGESPVEPAEPCHYSCPREEEGSTIPIQEDYRKPEPACSP. Serine 219 is modified (phosphoserine). A disordered region spans residues 219–260; sequence SNKGESPVEPAEPCHYSCPREEEGSTIPIQEDYRKPEPACSP. Over residues 249 to 260 the composition is skewed to basic and acidic residues; sequence EDYRKPEPACSP.

As to quaternary structure, homodimer. Interacts with SIVA1; may play a role in apoptosis through association with SIVA1. Interacts with TRAF2. Interacts ith PTPN6. In terms of processing, phosphorylated. Post-translationally, N-glycosylated. O-glycosylated with core 1 or possibly core 8 glycans. As to expression, found in most T-lymphocytes.

Its subcellular location is the cell membrane. In terms of biological role, costimulatory immune-checkpoint receptor expressed at the surface of T-cells, NK-cells and B-cells which binds to and is activated by its ligand CD70/CD27L expressed by B-cells. The CD70-CD27 signaling pathway mediates antigen-specific T-cell activation and expansion which in turn provides immune surveillance of B-cells. Mechanistically, CD70 ligation activates the TRAF2-PTPN6 axis that subsequently inhibits LCK phosphorylation to promote phenotypic and transcriptional adaptations of T-cell memory. In addition, activation by CD70 on early progenitor cells provides a negative feedback signal to leukocyte differentiation during immune activation and thus modulates hematopoiesis. Negatively regulates the function of Th2 lymphocytes in the adipose tissue. This Homo sapiens (Human) protein is CD27 antigen.